We begin with the raw amino-acid sequence, 838 residues long: MSENTKVEAKRVFIGAGCNRVVNNVSWGASGLVSFGAQNAVAVFCPKTAQILTTLPGHKASVNCTHWLPTSKFAFKAKKLDRQYLLSGDSDGIIILWELSTLNNDWRHVLQLPLSHKKGVTCITAYMVSETDAMFASASSDGVVNVWDVSFPSQPSEECKVVCLDSICVDTKAIVTLSLAELPQNPGRFALALGGLDNKIKLYSGERTGKFTSVCELKGHTDWIRSLDFSLPLHTTEEIPNSIMLVSSSQDKVIRIWKLVLVGDVGSWRREITLASYIEGPVFVSGTFTYQISVESVLIGHEDWVYSVEWQPPVIDFIDGRLVNHQPLSILSASMDKTMMIWRPEKKTGVWVNVVCVGELSHCALGFYGGHWSPNSLSILAHGYGGAFHLWRNVSSSKESENWQMQKVPSGHFAAVTDVTWARTGEYLLSVSQDQTTRVFSAWKNDEGNEAEDEHWHELARPQVHGHDINCVAMVQGKGNHRFVSGAEEKVVRVFEAPLSFLKTLNHTCAGGEGSFPEDLQADVQVLGANMSALGLSQKPIYLHSSSEPLERNGGGEGLDTFETVPEAAPAELKEPPIEDQLAFHTLWPESHKLYGHGNELFSLCSDHKGNLVASSCKAQSASMAEIWLWEVGTWKAVGRLQSHSLTVTHLEFSYDDTLLLSVSRDRHFSVFSIQRTDNGEVSHKLMAKVEAHKRIIWACSWNPFGHQFATSSRDKTVKIWSVENDARIKQILVLPPFGSSVTAVAWTGLDRNEKSGCVAVGMESGLIELSNVKIIETEEGTTATAALALRLEPFMCHVSAVNRLAWRPTEKCESNQSLRWLTSCGDDNCVRVFNFKF.

WD repeat units follow at residues 17 to 56 (GCNRVVNNVSWGASGLVSFGAQNAVAVFCPKTAQILTTLP), 57 to 107 (GHKA…NDWR), 115 to 157 (SHKK…QPSE), 174 to 213 (IVTLSLAELPQNPGRFALALGGLDNKIKLYSGERTGKFTS), 219 to 267 (GHTD…DVGS), 300 to 352 (GHED…GVWV), 361 to 401 (SHCA…KESE), 411 to 450 (GHFAAVTDVTWARTGEYLLSVSQDQTTRVFSAWKNDEGNE), 464 to 505 (VHGH…LKTL), 596 to 640 (GHGN…AVGR), 643 to 682 (SHSLTVTHLEFSYDDTLLLSVSRDRHFSVFSIQRTDNGEV), 692 to 731 (AHKRIIWACSWNPFGHQFATSSRDKTVKIWSVENDARIKQ), 737 to 781 (PFGS…TEEG), and 797 to 835 (CHVSAVNRLAWRPTEKCESNQSLRWLTSCGDDNCVRVFN).

Belongs to the WD repeat ELP2 family. As to quaternary structure, component of the elongator complex which consists of ELP1/ELO2, ELP2, ELP3/ELO3, ELP4/ELO1, ELP5, and ELP6. In terms of tissue distribution, expressed in leaves, stems, roots, flowers, siliques and guard cells.

The protein localises to the cytoplasm. It localises to the nucleus. Its pathway is tRNA modification; 5-methoxycarbonylmethyl-2-thiouridine-tRNA biosynthesis. Component of the elongator complex which is required for multiple tRNA modifications, including mcm5U (5-methoxycarbonylmethyl uridine), mcm5s2U (5-methoxycarbonylmethyl-2-thiouridine), and ncm5U (5-carbamoylmethyl uridine). The elongator complex catalyzes formation of carboxymethyluridine in the wobble base at position 34 in tRNAs. Promotes organ development by modulating cell division rate. Prevents abscisic acid (ABA) signaling leading to stomatal closure and seedling growth inhibition. Involved in oxidative stress signaling. Prevents anthocyanin accumulation. Accelerator of defense gene induction required for rapid defense gene induction, and for the establishment of both basal and effector-triggered immunity (ETI), in a NPR1-independent manner, but is not required for systemic acquired resistance (SAR) establishment. In Arabidopsis thaliana (Mouse-ear cress), this protein is Elongator complex protein 2 (ELP2).